The following is a 495-amino-acid chain: Cobyric acid synthase (495 aa).

The GATase cobBQ-type domain occupies 262–445; the sequence is CLEIAVIRLP…LHGLFDNHRW (184 aa). Cysteine 340 (nucleophile) is an active-site residue. Histidine 437 is a catalytic residue.

Belongs to the CobB/CobQ family. CobQ subfamily.

The protein operates within cofactor biosynthesis; adenosylcobalamin biosynthesis. Its function is as follows. Catalyzes amidations at positions B, D, E, and G on adenosylcobyrinic A,C-diamide. NH(2) groups are provided by glutamine, and one molecule of ATP is hydrogenolyzed for each amidation. This Synechococcus sp. (strain JA-3-3Ab) (Cyanobacteria bacterium Yellowstone A-Prime) protein is Cobyric acid synthase.